We begin with the raw amino-acid sequence, 164 residues long: Phosphopantetheine adenylyltransferase (164 aa).

Substrate is bound at residue Ser9. ATP is bound by residues 9-10 (SF) and His17. Residues Lys41, Leu73, and Lys87 each coordinate substrate. ATP contacts are provided by residues 88-90 (GLR), Glu98, and 123-129 (YSYISSS).

It belongs to the bacterial CoaD family. In terms of assembly, homohexamer. Mg(2+) serves as cofactor.

It localises to the cytoplasm. The enzyme catalyses (R)-4'-phosphopantetheine + ATP + H(+) = 3'-dephospho-CoA + diphosphate. The protein operates within cofactor biosynthesis; coenzyme A biosynthesis; CoA from (R)-pantothenate: step 4/5. In terms of biological role, reversibly transfers an adenylyl group from ATP to 4'-phosphopantetheine, yielding dephospho-CoA (dPCoA) and pyrophosphate. This chain is Phosphopantetheine adenylyltransferase, found in Clostridium perfringens (strain SM101 / Type A).